Here is a 247-residue protein sequence, read N- to C-terminus: 1-(5-phosphoribosyl)-5-[(5-phosphoribosylamino)methylideneamino] imidazole-4-carboxamide isomerase 2 (247 aa).

Glutamate 8 serves as the catalytic Proton acceptor. Aspartate 128 serves as the catalytic Proton donor.

This sequence belongs to the HisA/HisF family.

The protein resides in the cytoplasm. It carries out the reaction 1-(5-phospho-beta-D-ribosyl)-5-[(5-phospho-beta-D-ribosylamino)methylideneamino]imidazole-4-carboxamide = 5-[(5-phospho-1-deoxy-D-ribulos-1-ylimino)methylamino]-1-(5-phospho-beta-D-ribosyl)imidazole-4-carboxamide. The protein operates within amino-acid biosynthesis; L-histidine biosynthesis; L-histidine from 5-phospho-alpha-D-ribose 1-diphosphate: step 4/9. The sequence is that of 1-(5-phosphoribosyl)-5-[(5-phosphoribosylamino)methylideneamino] imidazole-4-carboxamide isomerase 2 from Ruegeria pomeroyi (strain ATCC 700808 / DSM 15171 / DSS-3) (Silicibacter pomeroyi).